A 429-amino-acid chain; its full sequence is 3-phosphoshikimate 1-carboxyvinyltransferase (429 aa).

Positions 11, 12, and 16 each coordinate 3-phosphoshikimate. Position 11 (Lys11) interacts with phosphoenolpyruvate. Phosphoenolpyruvate contacts are provided by Gly82 and Arg110. Ser155, Gln157, Asp302, and Lys329 together coordinate 3-phosphoshikimate. Gln157 serves as a coordination point for phosphoenolpyruvate. Asp302 serves as the catalytic Proton acceptor. 2 residues coordinate phosphoenolpyruvate: Arg333 and Arg385.

Belongs to the EPSP synthase family. In terms of assembly, monomer.

It localises to the cytoplasm. It catalyses the reaction 3-phosphoshikimate + phosphoenolpyruvate = 5-O-(1-carboxyvinyl)-3-phosphoshikimate + phosphate. It participates in metabolic intermediate biosynthesis; chorismate biosynthesis; chorismate from D-erythrose 4-phosphate and phosphoenolpyruvate: step 6/7. Its function is as follows. Catalyzes the transfer of the enolpyruvyl moiety of phosphoenolpyruvate (PEP) to the 5-hydroxyl of shikimate-3-phosphate (S3P) to produce enolpyruvyl shikimate-3-phosphate and inorganic phosphate. The sequence is that of 3-phosphoshikimate 1-carboxyvinyltransferase from Helicobacter pylori (strain HPAG1).